A 145-amino-acid chain; its full sequence is Angiogenin (145 aa).

Positions methionine 1–alanine 24 are cleaved as a signal peptide. Glutamine 25 is subject to Pyrrolidone carboxylic acid. Histidine 37 acts as the Proton acceptor in catalysis. Residues arginine 45 and aspartate 46 each contribute to the tRNA site. Intrachain disulfides connect cysteine 50–cysteine 104, cysteine 63–cysteine 115, and cysteine 81–cysteine 130. Residues lysine 55 to leucine 59 carry the Nucleolar localization signal motif. TRNA contacts are provided by cysteine 104 and valine 126. The active-site Proton donor is histidine 137.

This sequence belongs to the pancreatic ribonuclease family. In terms of assembly, homodimer. Interacts with RNH1; inhibiting ANG ribonuclease activity. Interacts with PCNA.

It is found in the secreted. The protein localises to the nucleus. Its subcellular location is the nucleolus. It localises to the cytoplasm. The protein resides in the stress granule. With respect to regulation, has weak tRNA ribonuclease activity by itself due to partial autoinhibition by its C-terminus (residues 139-145), which folds into a short alpha-helix that partially occludes the substrate-binding site. In absence of stress, the ribonuclease activity is inhibited by RNH1 in the cytoplasm. In response to stress, dissociates from RNH1 in the cytoplasm and associates with cytoplasmic ribosomes with vacant A-sites: ribosomes directly activate the tRNA ribonuclease activity of ANG by refolding the C-terminal alpha-helix. In response to stress, the angiogenic activity of ANG is inhibited by RNH1 in the nucleus. In terms of biological role, secreted ribonuclease that can either promote or restrict cell proliferation of target cells, depending on the context. Endocytosed in target cells via its receptor PLXNB2 and translocates to the cytoplasm or nucleus. Under stress conditions, localizes to the cytoplasm and promotes the assembly of stress granules (SGs): specifically cleaves a subset of tRNAs within anticodon loops to produce tRNA-derived stress-induced fragments (tiRNAs), resulting in translation repression and inhibition of cell proliferation. tiRNas also prevent formation of apoptosome, thereby promoting cell survival. Preferentially cleaves RNAs between a pyrimidine and an adenosine residue, suggesting that it cleaves the anticodon loop of tRNA(Ala) (32-UUAGCAU-38) after positions 33 and 36. Cleaves a subset of tRNAs, including tRNA(Ala), tRNA(Glu), tRNA(Gly), tRNA(Lys), tRNA(Val), tRNA(His), tRNA(Asp) and tRNA(Sec). Under growth conditions and in differentiated cells, translocates to the nucleus and stimulates ribosomal RNA (rRNA) transcription, including that containing the initiation site sequences of 45S rRNA, thereby promoting cell growth and proliferation. Angiogenin induces vascularization of normal and malignant tissues via its ability to promote rRNA transcription. Involved in hematopoietic stem and progenitor cell (HSPC) growth and survival by promoting rRNA transcription in growth conditions and inhibiting translation in response to stress, respectively. Mediates the crosstalk between myeloid and intestinal epithelial cells to protect the intestinal epithelial barrier integrity: secreted by myeloid cells and promotes intestinal epithelial cells proliferation and survival. Also mediates osteoclast-endothelial cell crosstalk in growing bone: produced by osteoclasts and protects the neighboring vascular cells against senescence by promoting rRNA transcription. The polypeptide is Angiogenin (Mus musculus (Mouse)).